Consider the following 361-residue polypeptide: Peptide chain release factor 1 (361 aa).

Gln236 is modified (N5-methylglutamine). The disordered stretch occupies residues 286–306 (AADSQRAEARKGQVGSGDRSE).

The protein belongs to the prokaryotic/mitochondrial release factor family. Methylated by PrmC. Methylation increases the termination efficiency of RF1.

It is found in the cytoplasm. In terms of biological role, peptide chain release factor 1 directs the termination of translation in response to the peptide chain termination codons UAG and UAA. This is Peptide chain release factor 1 from Magnetococcus marinus (strain ATCC BAA-1437 / JCM 17883 / MC-1).